Reading from the N-terminus, the 1475-residue chain is Protein Shroom4 (1475 aa).

The region spanning 10–92 (YVPVQLQGGA…ILKLIVRRRN (83 aa)) is the PDZ domain. Disordered regions lie at residues 151–175 (EKSSSIGSMESLEQPGQPTYEGHLL) and 202–321 (CALS…PPRS). Polar residues predominate over residues 249-258 (TSTSHASSYS). The segment covering 294–312 (EQHRASEPVDSLPQKEKPG) has biased composition (basic and acidic residues). At Ser412 the chain carries Phosphoserine. Disordered stretches follow at residues 432-523 (SKGM…PSAT), 542-577 (HTEASEEGDNEPKECGRLGGRRSGGPRGRSIQNRRR), 610-644 (NEAVEETQEPPESPPLSASNASLLPSYKNVPSPGD), and 658-688 (SECLSQASESSKARGGVEGRMSPGQRSGQSS). A compositionally biased stretch (basic and acidic residues) spans 471–485 (QTRKERKTTPLDDKL). The segment covering 513–523 (SDLTSQQPSAT) has biased composition (polar residues). Residues 542 to 557 (HTEASEEGDNEPKECG) show a composition bias toward basic and acidic residues. Residues 558–568 (RLGGRRSGGPR) show a composition bias toward gly residues. 2 stretches are compositionally biased toward low complexity: residues 624–635 (PLSASNASLLPS) and 658–667 (SECLSQASES). A Phosphoserine modification is found at Ser722. Composition is skewed to polar residues over residues 727–738 (AQPQVALSTEAP) and 775–791 (KSLSTSHLPGLTTHNNK). Disordered stretches follow at residues 727–753 (AQPQVALSTEAPSNPDDSKELKTSTPQ) and 772–791 (ESSKSLSTSHLPGLTTHNNK). Position 1010 is a phosphoserine (Ser1010). 2 disordered regions span residues 1022 to 1041 (SNKPEESSVYEDENSVASMP) and 1055 to 1185 (SLEP…QSLQ). The span at 1090 to 1099 (FPPPRPPPPN) shows a compositional bias: pro residues. The segment covering 1110–1125 (QLQQQQQQQQQQQQQQ) has biased composition (low complexity). A compositionally biased stretch (acidic residues) spans 1128–1145 (EEEEEKEQEEEGEKEEDL). The span at 1149-1168 (YFSSELTGSCAPNTEEQPQS) shows a compositional bias: polar residues. Residues 1190–1469 (FALHPSNFVP…QLKCLKESLH (280 aa)) enclose the ASD2 domain. Residues 1380-1470 (SESNQEKLVL…LKCLKESLHL (91 aa)) adopt a coiled-coil conformation.

Belongs to the shroom family. Interacts directly with F-actin. In terms of tissue distribution, detected in most adult tissues examined. Expressed in brain, lung, heart, liver, kidney, muscle and ovary. Expressed throughout the brain, with high expression in the brain stem and cerebellum and weaker expression in the hypothalamus, the hippocampus and the olfactory bulb. Expressed in wide range of cell types during development, including vascular endothelium and the polarized epithelium of the neural tube and kidney.

It localises to the cytoplasm. The protein resides in the cytoskeleton. Probable regulator of cytoskeletal architecture that plays an important role in development. May regulate cellular and cytoskeletal architecture by modulating the spatial distribution of myosin II. In Mus musculus (Mouse), this protein is Protein Shroom4 (Shroom4).